Here is a 602-residue protein sequence, read N- to C-terminus: Solute carrier organic anion transporter family member 1C1 (602 aa).

The Cytoplasmic segment spans residues 1–43; the sequence is MDTSSKENIQLFCKTSVQPVGRPSFKTEYPSSEEKQPCCGELK. A helical membrane pass occupies residues 44–63; it reads VFLGALSFVYFAKALAEGYL. The Extracellular segment spans residues 64 to 82; sequence KSTITQIERRFDIPSSLVG. A helical transmembrane segment spans residues 83–103; that stretch reads VIDGSFEIGNLLVITFVSYFG. At 104–109 the chain is on the cytoplasmic side; that stretch reads AKLHRP. Residues 110 to 134 form a helical membrane-spanning segment; sequence KIIGAGCLIMGVGTLLIAMPQFFME. Residues 135-139 are Extracellular-facing; that stretch reads QYKYE. Residues 140-156 traverse the membrane as a helical segment; the sequence is IYSPSSNSTLSISPCLL. Residues 157-238 lie on the Cytoplasmic side of the membrane; that stretch reads ESSSQLPVSV…ARDFLPSLKY (82 aa). Positions 190-216 are disordered; that stretch reads PRSQSREDSNSSSEKSKFIRDDHTDYQ. Positions 193-214 are enriched in basic and acidic residues; that stretch reads QSREDSNSSSEKSKFIRDDHTD. Residues 239-260 traverse the membrane as a helical segment; sequence LFGNPVYFLYLCTSTVQFNSLF. Residues 261 to 280 lie on the Extracellular side of the membrane; the sequence is GMVTYKPKYIEQQYGQSSSR. A helical membrane pass occupies residues 281-304; sequence ANFVIGLINIPAVALGIFSGGIAM. The Cytoplasmic portion of the chain corresponds to 305–308; that stretch reads KKFR. A helical membrane pass occupies residues 309–332; that stretch reads ISVCGAAKLYLGSSVFGYLLFLSL. At 333 to 444 the chain is on the extracellular side; it reads FALGCENSDV…NGCPQMFLYF (112 aa). The Kazal-like domain maps to 360-415; it reads RALFSDCNPRCKCSETKWEPMCGENGITYVSACPAGCQTSNRSGKNIIFYNCTCVG. 3 disulfide bridges follow: Cys-366/Cys-396, Cys-372/Cys-392, and Cys-381/Cys-413. Residues Asn-400, Asn-410, and Asn-423 are each glycosylated (N-linked (GlcNAc...) asparagine). A helical membrane pass occupies residues 445-467; sequence LVISVITSYTLSLGGIPGYILLL. Over 468 to 476 the chain is Cytoplasmic; that stretch reads RCIKPQLKS. The helical transmembrane segment at 477-502 threads the bilayer; sequence FALGIYTLSIRVLAGIPAPVYFGVLI. Topologically, residues 503–536 are extracellular; that stretch reads DTSCLKWGFKRCGSRGSCRLYDSNVFRHIYLGLT. A helical transmembrane segment spans residues 537-554; it reads VILGTVSIFLSIAVLFIL. The Cytoplasmic segment spans residues 555–602; it reads KKNYVSKHRNFITKRERTMVSTRFQKENCTTSDHLLQPKYWPGKETQL.

It belongs to the organo anion transporter (TC 2.A.60) family.

Its subcellular location is the cell membrane. It carries out the reaction 3,3',5'-triiodo-L-thyronine(out) = 3,3',5'-triiodo-L-thyronine(in). The enzyme catalyses L-thyroxine(out) = L-thyroxine(in). The catalysed reaction is L-thyroxine sulfate(out) = L-thyroxine sulfate(in). In terms of biological role, mediates the Na(+)-independent high affinity transport of organic anions such as the thyroid hormones L-thyroxine (T4), L-thyroxine sulfate (T4S), and 3,3',5'-triiodo-L-thyronine (reverse T3, rT3) at the plasma membrane. Regulates T4 levels in different brain regions by transporting T4, and also by serving as an export pump for T4S, which is a source of T4 after hydrolysis by local sulfatases. Increases the access of these substrates to the intracellular sites where they are metabolized by the deiodinases. Other potential substrates, such as triiodothyronine (T3), 17-beta-glucuronosyl estradiol (17beta-estradiol 17-O-(beta-D-glucuronate)), estrone-3-sulfate (E1S) and sulfobromophthalein (BSP) are transported with much lower efficiency. Transports T4 and E1S in a pH-insensitive manner. Facilitates the transport of thyroid hormones across the blood-brain barrier and into glia and neuronal cells in the brain. The protein is Solute carrier organic anion transporter family member 1C1 (SLCO1C1) of Macaca fascicularis (Crab-eating macaque).